A 555-amino-acid chain; its full sequence is Putative protein NRT1/ PTR FAMILY 2.14 (555 aa).

The next 12 membrane-spanning stretches (helical) occupy residues 62-82 (VTLI…GAFI), 93-113 (IVFG…TSLV), 135-155 (YSQL…TGGI), 181-201 (FFSW…TLVL), 209-229 (WGIG…LLFV), 234-254 (YVFV…LVAA), 319-339 (IKSI…FLAM), 363-383 (LIPP…WLPF), 405-425 (LQKV…SGIV), 441-461 (VFWL…TIVG), 480-500 (SLLY…VSIV), and 523-543 (CFYY…FWCA).

Belongs to the major facilitator superfamily. Proton-dependent oligopeptide transporter (POT/PTR) (TC 2.A.17) family. In terms of tissue distribution, not detected.

The protein localises to the membrane. The chain is Putative protein NRT1/ PTR FAMILY 2.14 (NPF2.14) from Arabidopsis thaliana (Mouse-ear cress).